We begin with the raw amino-acid sequence, 247 residues long: Transcription factor bHLH92 (247 aa).

One can recognise a bHLH domain in the interval 85–134 (ERSRRHMLKERTRREKQKQSYLALHSLLPFATKNDKNSIVEKAVDEIAKL).

In terms of assembly, homodimer.

It is found in the nucleus. The polypeptide is Transcription factor bHLH92 (BHLH92) (Arabidopsis thaliana (Mouse-ear cress)).